The following is a 1068-amino-acid chain: Focal adhesion kinase 1 (1068 aa).

The disordered stretch occupies residues methionine 1–methionine 26. Residues leucine 10–serine 23 are compositionally biased toward polar residues. Positions arginine 35–serine 355 constitute an FERM domain. Phosphotyrosine is present on residues tyrosine 403 and tyrosine 413. Residues isoleucine 435 to leucine 693 enclose the Protein kinase domain. Residues isoleucine 441–glycine 447, lysine 467, and glutamate 513–cysteine 515 contribute to the ATP site. Catalysis depends on aspartate 559, which acts as the Proton acceptor. 2 positions are modified to phosphotyrosine; by autocatalysis: tyrosine 589 and tyrosine 590. The span at glutamine 699–arginine 710 shows a compositional bias: basic and acidic residues. 2 disordered regions span residues glutamine 699–methionine 750 and glycine 869–asparagine 912. Tyrosine 874 and tyrosine 941 each carry phosphotyrosine.

This sequence belongs to the protein kinase superfamily. Tyr protein kinase family. FAK subfamily. Post-translationally, phosphorylated on tyrosine residues; phosphorylated kinase is first detected during gastrulation, suggesting that tyrosine phosphorylation is developmentally regulated.

It localises to the cell junction. It is found in the focal adhesion. Its subcellular location is the cell membrane. The protein resides in the cytoplasm. The protein localises to the cytoskeleton. It localises to the cilium basal body. It catalyses the reaction L-tyrosyl-[protein] + ATP = O-phospho-L-tyrosyl-[protein] + ADP + H(+). Functionally, non-receptor protein-tyrosine kinase implicated in signaling pathways involved in cell motility, proliferation and apoptosis. Activated by tyrosine-phosphorylation in response to either integrin clustering induced by cell adhesion or antibody cross-linking, or via G-protein coupled receptor (GPCR) occupancy by ligands such as bombesin or lysophosphatidic acid, or via LDL receptor occupancy. Microtubule-induced dephosphorylation at Tyr-397 is crucial for the induction of focal adhesion disassembly. This Xenopus laevis (African clawed frog) protein is Focal adhesion kinase 1 (ptk2).